A 2103-amino-acid chain; its full sequence is Zinc finger SWIM domain-containing protein 8 homolog (2103 aa).

The segment at 191-227 (FNVAVTFDRRRISSCNCTCTSSAYWCSHVVAVCLHRI) adopts an SWIM-type zinc-finger fold. 6 disordered regions span residues 684 to 860 (DGNR…GSTA), 1237 to 1262 (SSNP…GGSG), 1310 to 1399 (SSGS…IPNQ), 1735 to 1772 (MQMF…QVVQ), 1786 to 1864 (QQVQ…GVGV), and 1888 to 1916 (PFMQ…RQPH). A compositionally biased stretch (polar residues) spans 724–740 (SALTESDSQSSFDAVSH). Composition is skewed to low complexity over residues 754 to 789 (AVGV…STSS) and 835 to 857 (GRVA…VGSG). A compositionally biased stretch (polar residues) spans 1237 to 1249 (SSNPPVRTRSNQP). Residues 1320–1351 (GMVPTTNAAGTTGTPSSSSTTVSGSQNPNGNP) show a composition bias toward low complexity. Over residues 1352–1377 (SGSGGGGNGGGGNGGGGGGGGGGGGS) the composition is skewed to gly residues. Residues 1755–1764 (QPPPQQPPNP) are compositionally biased toward pro residues. Composition is skewed to low complexity over residues 1786-1813 (QQVQ…SGFQ) and 1820-1835 (AFQA…MQAG). Pro residues-rich tracts occupy residues 1836–1859 (PPGP…PNGP) and 1894–1908 (PPQP…PSQP).

The protein belongs to the ZSWIM8 family. As to quaternary structure, component of the SCF-like E3 ubiquitin-protein ligase complex.

The protein operates within protein modification; protein ubiquitination. Functionally, substrate recognition component of a SCF-like E3 ubiquitin-protein ligase complex that promotes target-directed microRNA degradation (TDMD), a process that mediates degradation of microRNAs (miRNAs). The SCF-like E3 ubiquitin-protein ligase complex acts by catalyzing ubiquitination and subsequent degradation of AGO1, thereby exposing miRNAs for degradation. This is Zinc finger SWIM domain-containing protein 8 homolog from Drosophila melanogaster (Fruit fly).